We begin with the raw amino-acid sequence, 201 residues long: 3-isopropylmalate dehydratase small subunit (201 aa).

It belongs to the LeuD family. LeuD type 1 subfamily. Heterodimer of LeuC and LeuD.

It carries out the reaction (2R,3S)-3-isopropylmalate = (2S)-2-isopropylmalate. The protein operates within amino-acid biosynthesis; L-leucine biosynthesis; L-leucine from 3-methyl-2-oxobutanoate: step 2/4. Functionally, catalyzes the isomerization between 2-isopropylmalate and 3-isopropylmalate, via the formation of 2-isopropylmaleate. This chain is 3-isopropylmalate dehydratase small subunit, found in Shewanella woodyi (strain ATCC 51908 / MS32).